The sequence spans 250 residues: Triosephosphate isomerase (250 aa).

10-12 contributes to the substrate binding site; the sequence is NWK. H96 acts as the Electrophile in catalysis. E168 serves as the catalytic Proton acceptor. Residues G174, S214, and 235 to 236 each bind substrate; that span reads GG.

Belongs to the triosephosphate isomerase family. In terms of assembly, homodimer.

The protein localises to the cytoplasm. The enzyme catalyses D-glyceraldehyde 3-phosphate = dihydroxyacetone phosphate. Its pathway is carbohydrate biosynthesis; gluconeogenesis. It functions in the pathway carbohydrate degradation; glycolysis; D-glyceraldehyde 3-phosphate from glycerone phosphate: step 1/1. Its function is as follows. Involved in the gluconeogenesis. Catalyzes stereospecifically the conversion of dihydroxyacetone phosphate (DHAP) to D-glyceraldehyde-3-phosphate (G3P). This chain is Triosephosphate isomerase, found in Streptococcus suis (strain 98HAH33).